Consider the following 547-residue polypeptide: GMP synthase [glutamine-hydrolyzing] (547 aa).

The region spanning 12-210 (KILILDFGSQ…VLDIAGAKPD (199 aa)) is the Glutamine amidotransferase type-1 domain. Catalysis depends on C89, which acts as the Nucleophile. Active-site residues include H184 and E186. Positions 211–403 (WIMRDHIEEA…LGLPAEMVYR (193 aa)) constitute a GMPS ATP-PPase domain. Residue 238–244 (SGGVDSS) coordinates ATP.

As to quaternary structure, homodimer.

It catalyses the reaction XMP + L-glutamine + ATP + H2O = GMP + L-glutamate + AMP + diphosphate + 2 H(+). It participates in purine metabolism; GMP biosynthesis; GMP from XMP (L-Gln route): step 1/1. In terms of biological role, catalyzes the synthesis of GMP from XMP. The polypeptide is GMP synthase [glutamine-hydrolyzing] (Burkholderia pseudomallei (strain 1710b)).